The chain runs to 301 residues: Protoheme IX farnesyltransferase 1 (301 aa).

Helical transmembrane passes span 29 to 49 (VVALMLLTVLVGMCLAVPTAV), 51 to 71 (VQPLIAGMFGIALMAGSAAAL), 101 to 121 (ALIFAASIGGLGFVVLYVLVN), 123 to 143 (LTAWLTFASLIGYALVYTAYL), 150 to 170 (NIVIGGLAGAMPPLLGWTAVT), 177 to 197 (ALLLVIIIFTWTPPHFWALAI), 223 to 243 (CILLYTVLLAIACLLPVLVGM), 244 to 264 (CGPMYFVCSSLLSSVFIYKAW), and 281 to 301 (FSIYHLMLLFMALLIDHYLWS).

It belongs to the UbiA prenyltransferase family. Protoheme IX farnesyltransferase subfamily.

Its subcellular location is the cell inner membrane. It catalyses the reaction heme b + (2E,6E)-farnesyl diphosphate + H2O = Fe(II)-heme o + diphosphate. It functions in the pathway porphyrin-containing compound metabolism; heme O biosynthesis; heme O from protoheme: step 1/1. In terms of biological role, converts heme B (protoheme IX) to heme O by substitution of the vinyl group on carbon 2 of heme B porphyrin ring with a hydroxyethyl farnesyl side group. The protein is Protoheme IX farnesyltransferase 1 of Shewanella putrefaciens (strain CN-32 / ATCC BAA-453).